Reading from the N-terminus, the 128-residue chain is T-cell leukemia/lymphoma protein 1B (128 aa).

This sequence belongs to the TCL1 family. In terms of assembly, interacts with AKT1 and AKT2 (via PH domain). Does not interact with AKT3. In terms of tissue distribution, expressed in a variety of tissues including placenta and testis.

Enhances the phosphorylation and activation of AKT1 and AKT2. The sequence is that of T-cell leukemia/lymphoma protein 1B (TCL1B) from Homo sapiens (Human).